Consider the following 213-residue polypeptide: Glycerol-3-phosphate acyltransferase (213 aa).

6 consecutive transmembrane segments (helical) span residues isoleucine 2 to isoleucine 22, alanine 52 to phenylalanine 74, proline 81 to phenylalanine 100, valine 112 to leucine 132, valine 143 to leucine 163, and serine 164 to arginine 184.

This sequence belongs to the PlsY family. Probably interacts with PlsX.

The protein resides in the cell membrane. The catalysed reaction is an acyl phosphate + sn-glycerol 3-phosphate = a 1-acyl-sn-glycero-3-phosphate + phosphate. It participates in lipid metabolism; phospholipid metabolism. Its function is as follows. Catalyzes the transfer of an acyl group from acyl-phosphate (acyl-PO(4)) to glycerol-3-phosphate (G3P) to form lysophosphatidic acid (LPA). This enzyme utilizes acyl-phosphate as fatty acyl donor, but not acyl-CoA or acyl-ACP. The sequence is that of Glycerol-3-phosphate acyltransferase from Streptococcus pneumoniae (strain CGSP14).